Reading from the N-terminus, the 442-residue chain is Proline--tRNA ligase (442 aa).

The protein belongs to the class-II aminoacyl-tRNA synthetase family. ProS type 2 subfamily. Homodimer.

Its subcellular location is the cytoplasm. The catalysed reaction is tRNA(Pro) + L-proline + ATP = L-prolyl-tRNA(Pro) + AMP + diphosphate. Its function is as follows. Catalyzes the attachment of proline to tRNA(Pro) in a two-step reaction: proline is first activated by ATP to form Pro-AMP and then transferred to the acceptor end of tRNA(Pro). The chain is Proline--tRNA ligase from Brucella canis (strain ATCC 23365 / NCTC 10854 / RM-666).